We begin with the raw amino-acid sequence, 445 residues long: Xylose isomerase (445 aa).

Catalysis depends on residues His107 and Asp110. The Mg(2+) site is built by Glu238, Glu274, His277, Asp302, Asp313, Asp315, and Asp345.

It belongs to the xylose isomerase family. In terms of assembly, homotetramer. Mg(2+) serves as cofactor.

The protein localises to the cytoplasm. The enzyme catalyses alpha-D-xylose = alpha-D-xylulofuranose. The polypeptide is Xylose isomerase (Bacillus velezensis (strain DSM 23117 / BGSC 10A6 / LMG 26770 / FZB42) (Bacillus amyloliquefaciens subsp. plantarum)).